A 2769-amino-acid polypeptide reads, in one-letter code: Thyroglobulin (2769 aa).

Positions 1–19 (MALALWVFGLLDLICLASA) are cleaved as a signal peptide. Residue Tyr24 is modified to Iodotyrosine; alternate. Position 24 is a sulfotyrosine; alternate (Tyr24). Residue Tyr24 is modified to Thyroxine; alternate. Tyr24 is modified (triiodothyronine; alternate). 4 Thyroglobulin type-1 domains span residues 31–92 (LRPC…PAAC), 93–160 (LSFC…PARC), 161–297 (PRSC…RFRC), and 298–358 (PTKC…PPSC). Intrachain disulfides connect Cys34-Cys52, Cys63-Cys70, Cys72-Cys92, Cys96-Cys120, Cys131-Cys138, Cys140-Cys160, Cys164-Cys183, and Cys194-Cys235. Tyr108 carries the iodotyrosine modification. An N-linked (GlcNAc...) (complex) asparagine; alternate glycan is attached at Asn110. An N-linked (GlcNAc...) (hybrid) asparagine; alternate glycan is attached at Asn110. Residue Tyr149 is modified to Iodotyrosine; alternate. Position 149 is a diiodotyrosine; alternate (Tyr149). Residues Tyr234 and Tyr258 each carry the iodotyrosine modification. Disulfide bonds link Cys301/Cys319, Cys330/Cys336, Cys338/Cys358, Cys364/Cys619, Cys408/Cys607, Cys630/Cys635, Cys637/Cys657, Cys661/Cys686, and Cys697/Cys702. 2 N-linked (GlcNAc...) (complex) asparagine; alternate glycosylation sites follow: Asn483 and Asn495. N-linked (GlcNAc...) (hybrid) asparagine; alternate glycosylation is found at Asn483 and Asn495. Thyroglobulin type-1 domains are found at residues 604–657 (SQGC…RPRC), 658–725 (PTEC…PKKC), 726–921 (PSPC…VPAC), 922–1073 (PGSC…IPQC), 1074–1145 (PTSC…SAQC), and 1146–1210 (PSLC…QPAC). Iodotyrosine; alternate is present on Tyr703. Thyroxine; alternate is present on Tyr703. Tyr703 is modified (triiodothyronine; alternate). Tyr703 bears the Diiodotyrosine; alternate mark. 16 disulfide bridges follow: Cys704/Cys725, Cys729/Cys762, Cys773/Cys898, Cys900/Cys921, Cys925/Cys1031, Cys1042/Cys1049, Cys1051/Cys1073, Cys1077/Cys1108, Cys1126/Cys1145, Cys1149/Cys1169, Cys1181/Cys1188, Cys1190/Cys1210, Cys1215/Cys1264, Cys1231/Cys1245, Cys1306/Cys1356, and Cys1331/Cys1347. Tyr784 is modified (iodotyrosine). N-linked (GlcNAc...) (complex) asparagine; alternate glycosylation occurs at Asn853. An N-linked (GlcNAc...) (hybrid) asparagine; alternate glycan is attached at Asn853. The residue at position 866 (Tyr866) is an Iodotyrosine; alternate. Tyr866 is modified (diiodotyrosine; alternate). Tyr883 carries the post-translational modification Diiodotyrosine. Asn947 is a glycosylation site (N-linked (GlcNAc...) (complex) asparagine; alternate). Asn947 carries an N-linked (GlcNAc...) (hybrid) asparagine; alternate glycan. Tyr992 is subject to Iodotyrosine; alternate. A Diiodotyrosine; alternate modification is found at Tyr992. Asn1140 carries an N-linked (GlcNAc...) (complex) asparagine; alternate glycan. N-linked (GlcNAc...) (hybrid) asparagine; alternate glycosylation occurs at Asn1140. An Iodotyrosine modification is found at Tyr1310. Thyroxine is present on Tyr1310. Residue Asn1365 is glycosylated (N-linked (GlcNAc...) (high mannose) asparagine). 13 cysteine pairs are disulfide-bonded: Cys1441/Cys1461, Cys1464/Cys1475, Cys1478/Cys1492, Cys1495/Cys1512, Cys1516/Cys1525, Cys1545/Cys1567, Cys1605/Cys1629, Cys1609/Cys1615, Cys1641/Cys1664, Cys1726/Cys1751, Cys1730/Cys1736, Cys1735/Cys1836, and Cys1762/Cys1779. Type II repeat units lie at residues 1458–1471 (ALGC…SYFQ), 1472–1488 (DEQC…EQAG), and 1489–1505 (SLAC…VYAG). Position 1469 is an iodotyrosine; alternate (Tyr1469). Tyr1469 carries the diiodotyrosine; alternate modification. Residues 1513–1567 (VTDCQKNEVGLQCDQDSQYRASQRDRTSGKAFCVDGEGRRLPWTEAEAPLVDAQC) form the Thyroglobulin type-1 11 domain. A Type IIIA repeat occupies 1605-1725 (CLADCALDEA…GASLAEVHLF (121 aa)). The stretch at 1726 to 1893 (CLLACDHDSC…LFSLQQANLW (168 aa)) is one Type IIIB repeat. Residue Asn1776 is glycosylated (N-linked (GlcNAc...) (complex) asparagine; alternate). A glycan (N-linked (GlcNAc...) (hybrid) asparagine; alternate) is linked at Asn1776. Positions 1827–1842 (MGSRSESMGCRRDTEP) are enriched in basic and acidic residues. Residues 1827–1851 (MGSRSESMGCRRDTEPRPASPSETD) are disordered. Asn1870 carries N-linked (GlcNAc...) (complex) asparagine; alternate glycosylation. N-linked (GlcNAc...) (hybrid) asparagine; alternate glycosylation occurs at Asn1870. 7 cysteine pairs are disulfide-bonded: Cys1894/Cys1920, Cys1898/Cys1905, Cys1929/Cys1940, Cys1997/Cys2025, Cys2001/Cys2007, Cys2006/Cys2077, and Cys2036/Cys2049. A Type IIIA repeat occupies 1894-1996 (CLSRCAGEPS…DKSISSGFFE (103 aa)). Residues 1997–2130 (CERLCDMDPC…VGNFSAARDR (134 aa)) form a Type IIIB repeat. N-linked (GlcNAc...) (high mannose) asparagine glycosylation occurs at Asn2014. A glycan (N-linked (GlcNAc...) (high mannose) asparagine) is linked at Asn2123. Cystine bridges form between Cys2131/Cys2155, Cys2135/Cys2141, and Cys2164/Cys2173. The stretch at 2131-2188 (CLWECSRHQDCLVTTLQTQPGAVRCMFYADTQSCTHSLQAQNCRLLLHEEATYIYRKP) is one Type IIIA repeat. Tyr2185 bears the Iodotyrosine mark. A cholinesterase-like (ChEL) region spans residues 2189 to 2769 (NIPLPGFGTS…PELASKTYSK (581 aa)). Asn2251 carries N-linked (GlcNAc...) (complex) asparagine; alternate glycosylation. N-linked (GlcNAc...) (hybrid) asparagine; alternate glycosylation is present at Asn2251. N-linked (GlcNAc...) (high mannose) asparagine glycosylation is present at Asn2296. A disulfide bridge links Cys2443 with Cys2454. The residue at position 2541 (Tyr2541) is a Thyroxine. Tyr2574 bears the Iodotyrosine; alternate mark. Tyr2574 is subject to Thyroxine; alternate. Tyr2574 carries the triiodothyronine; alternate modification. Tyr2574 is modified (diiodotyrosine; alternate). An iodotyrosine mark is found at Tyr2588 and Tyr2618. Cys2592 and Cys2716 are disulfide-bonded. A Diiodotyrosine modification is found at Tyr2698. The disordered stretch occupies residues 2730–2769 (ADETKDGPSADSEEEDQPAGSGLTEDLLGLPELASKTYSK). Tyr2767 carries the iodotyrosine; alternate modification. The residue at position 2767 (Tyr2767) is a Thyroxine; alternate. Tyr2767 carries the triiodothyronine; alternate modification. The residue at position 2767 (Tyr2767) is a Diiodotyrosine; alternate.

The protein belongs to the type-B carboxylesterase/lipase family. Monomer. Homodimer (via ChEL region); occurs in the endoplasmic reticulum and is required for export to the Golgi apparatus. Homooligomer; disulfide-linked; stored in this form in the thyroid follicle lumen. Iodinated on tyrosine residues by TPO. There are 4 pairs of iodinated tyrosines used for coupling: acceptor Tyr-24 is coupled to donor Tyr-149 or Tyr-234, acceptor Tyr-2574 is coupled to donor Tyr-2541, acceptor Tyr-2767 in monomer 1 is coupled to donor Tyr-2767 in monomer 2 and acceptor Tyr-1310 in monomer 1 is coupled to donor Tyr-108 in monomer 2. In terms of processing, sulfated tyrosines are desulfated during iodination. Post-translationally, undergoes sequential proteolysis by cathepsins to release thyroxine (T4) and triiodothyronine (T3) hormones. In the thyroid follicle lumen, cross-linked TG (storage form) is solubilized by limited proteolysis mediated by cathepsins CTSB and/or CTSL. Partially cleaved TG is further processed by CTSK/cathepsin K and/or CTSL resulting in the release of T4. Following endocytosis, further processing occurs leading to the release of T3 and more T4 hormones. As to expression, specifically expressed in the thyroid gland.

Its subcellular location is the secreted. Functionally, acts as a substrate for the production of iodinated thyroid hormones thyroxine (T4) and triiodothyronine (T3). The synthesis of T3 and T4 involves iodination of selected tyrosine residues of TG/thyroglobulin followed by their oxidative coupling. Following TG re-internalization and lysosomal-mediated proteolysis, T3 and T4 are released from the polypeptide backbone leading to their secretion into the bloodstream. One dimer produces 7 thyroid hormone molecules. The polypeptide is Thyroglobulin (TG) (Bos taurus (Bovine)).